An 800-amino-acid polypeptide reads, in one-letter code: Phenylalanine--tRNA ligase beta subunit (800 aa).

In terms of domain architecture, tRNA-binding spans 39-147 (FDAIADIVVG…QDSVPGVRLV (109 aa)). One can recognise a B5 domain in the interval 401 to 477 (WQAAQLRFRP…RVYGMDNIPP (77 aa)). Positions 455, 461, 464, and 465 each coordinate Mg(2+). The region spanning 706-800 (PVFPPVKRDI…SLTEALGVRI (95 aa)) is the FDX-ACB domain.

The protein belongs to the phenylalanyl-tRNA synthetase beta subunit family. Type 1 subfamily. As to quaternary structure, tetramer of two alpha and two beta subunits. Mg(2+) is required as a cofactor.

Its subcellular location is the cytoplasm. The enzyme catalyses tRNA(Phe) + L-phenylalanine + ATP = L-phenylalanyl-tRNA(Phe) + AMP + diphosphate + H(+). The chain is Phenylalanine--tRNA ligase beta subunit from Oleidesulfovibrio alaskensis (strain ATCC BAA-1058 / DSM 17464 / G20) (Desulfovibrio alaskensis).